The sequence spans 184 residues: Peptidoglycan-recognition protein SC2 (184 aa).

The first 20 residues, 1 to 20 (MANKALILLAVLFCAQAVLG), serve as a signal peptide directing secretion. Residues 45-169 (SYAVIHHTAG…RQVGSTECPG (125 aa)) enclose the N-acetylmuramoyl-L-alanine amidase domain. Histidine 50 contributes to the Zn(2+) binding site. Residues cysteine 57 and cysteine 63 are joined by a disulfide bond. Zn(2+)-binding residues include histidine 159 and cysteine 167.

It belongs to the N-acetylmuramoyl-L-alanine amidase 2 family. Zn(2+) serves as cofactor.

It localises to the secreted. The enzyme catalyses Hydrolyzes the link between N-acetylmuramoyl residues and L-amino acid residues in certain cell-wall glycopeptides.. In terms of biological role, N-acetylmuramyl-L-alanine amidase involved in innate immunity by degrading bacterial peptidoglycans (PGN). Probably plays a scavenger role by digesting biologically active PGN into biologically inactive fragments. Has no direct bacteriolytic activity. The chain is Peptidoglycan-recognition protein SC2 (PGRP-SC2) from Drosophila simulans (Fruit fly).